Reading from the N-terminus, the 199-residue chain is DnaJ homolog subfamily C member 5B (199 aa).

Phosphoserine is present on residues serine 14 and serine 16. The 66-residue stretch at 19 to 84 (ALYEILGLHK…SKRNIYDKYG (66 aa)) folds into the J domain.

As to quaternary structure, interacts with the chaperone complex consisting of HSC70 and SGTA. Palmitoylated.

It is found in the membrane. The polypeptide is DnaJ homolog subfamily C member 5B (DNAJC5B) (Sus scrofa (Pig)).